The following is a 318-amino-acid chain: Acetaldehyde dehydrogenase 2 (318 aa).

NAD(+) is bound at residue 9-12; sequence SGNI. The active-site Acyl-thioester intermediate is the Cys129. Residues 160–168 and Asn288 contribute to the NAD(+) site; that span reads SAGPGTRAN.

The protein belongs to the acetaldehyde dehydrogenase family.

It catalyses the reaction acetaldehyde + NAD(+) + CoA = acetyl-CoA + NADH + H(+). This chain is Acetaldehyde dehydrogenase 2, found in Mycolicibacterium vanbaalenii (strain DSM 7251 / JCM 13017 / BCRC 16820 / KCTC 9966 / NRRL B-24157 / PYR-1) (Mycobacterium vanbaalenii).